The following is a 215-amino-acid chain: Translation initiation factor IF-3 (215 aa).

Residues 159–215 (SAEVQQPPKREGRNMIMFLGPRKTPLQKDKPEQATKAERTLPIAKPPGKTAAPAAAN) are disordered. Positions 184 to 197 (LQKDKPEQATKAER) are enriched in basic and acidic residues. A compositionally biased stretch (low complexity) spans 200-215 (PIAKPPGKTAAPAAAN).

This sequence belongs to the IF-3 family. Monomer.

It localises to the cytoplasm. Its function is as follows. IF-3 binds to the 30S ribosomal subunit and shifts the equilibrium between 70S ribosomes and their 50S and 30S subunits in favor of the free subunits, thus enhancing the availability of 30S subunits on which protein synthesis initiation begins. This Synechococcus sp. (strain RCC307) protein is Translation initiation factor IF-3.